We begin with the raw amino-acid sequence, 444 residues long: tRNA-2-methylthio-N(6)-dimethylallyladenosine synthase (444 aa).

Residues 2–119 form the MTTase N-terminal domain; it reads KKLYIRTFGC…LPSMLNEVLT (118 aa). Cys11, Cys48, Cys82, Cys161, Cys165, and Cys168 together coordinate [4Fe-4S] cluster. The region spanning 147–379 is the Radical SAM core domain; that stretch reads KTSSVTAFVS…QKTIDKNTER (233 aa). The 63-residue stretch at 382 to 444 folds into the TRAM domain; sequence KSMVGSVQKI…GNSLVGNLIA (63 aa).

Belongs to the methylthiotransferase family. MiaB subfamily. Monomer. [4Fe-4S] cluster is required as a cofactor.

It is found in the cytoplasm. The enzyme catalyses N(6)-dimethylallyladenosine(37) in tRNA + (sulfur carrier)-SH + AH2 + 2 S-adenosyl-L-methionine = 2-methylsulfanyl-N(6)-dimethylallyladenosine(37) in tRNA + (sulfur carrier)-H + 5'-deoxyadenosine + L-methionine + A + S-adenosyl-L-homocysteine + 2 H(+). Functionally, catalyzes the methylthiolation of N6-(dimethylallyl)adenosine (i(6)A), leading to the formation of 2-methylthio-N6-(dimethylallyl)adenosine (ms(2)i(6)A) at position 37 in tRNAs that read codons beginning with uridine. In Ruthia magnifica subsp. Calyptogena magnifica, this protein is tRNA-2-methylthio-N(6)-dimethylallyladenosine synthase.